The chain runs to 214 residues: Isochorismatase family protein 2B (214 aa).

Belongs to the isochorismatase family.

The sequence is that of Isochorismatase family protein 2B from Dictyostelium discoideum (Social amoeba).